A 90-amino-acid chain; its full sequence is YcgL domain-containing protein plu2139 (90 aa).

Residues 1–85 enclose the YcgL domain; it reads MICAIYSSPK…PVENLMNAHL (85 aa).

The sequence is that of YcgL domain-containing protein plu2139 from Photorhabdus laumondii subsp. laumondii (strain DSM 15139 / CIP 105565 / TT01) (Photorhabdus luminescens subsp. laumondii).